A 77-amino-acid polypeptide reads, in one-letter code: Exodeoxyribonuclease 7 small subunit (77 aa).

Belongs to the XseB family. As to quaternary structure, heterooligomer composed of large and small subunits.

The protein localises to the cytoplasm. It catalyses the reaction Exonucleolytic cleavage in either 5'- to 3'- or 3'- to 5'-direction to yield nucleoside 5'-phosphates.. Bidirectionally degrades single-stranded DNA into large acid-insoluble oligonucleotides, which are then degraded further into small acid-soluble oligonucleotides. This is Exodeoxyribonuclease 7 small subunit from Chromobacterium violaceum (strain ATCC 12472 / DSM 30191 / JCM 1249 / CCUG 213 / NBRC 12614 / NCIMB 9131 / NCTC 9757 / MK).